Consider the following 90-residue polypeptide: Probable Fe(2+)-trafficking protein (90 aa).

Belongs to the Fe(2+)-trafficking protein family. Monomer.

In terms of biological role, could be a mediator in iron transactions between iron acquisition and iron-requiring processes, such as synthesis and/or repair of Fe-S clusters in biosynthetic enzymes. This Yersinia pestis bv. Antiqua (strain Antiqua) protein is Probable Fe(2+)-trafficking protein.